Consider the following 541-residue polypeptide: Coiled-coil domain-containing protein 116 (541 aa).

Residues 79-102 (QVLDSLQTVVEQATERLAAMKTEA) are a coiled coil. Residues 346-397 (LPGNSDLLQPSSKASIPTNREARGEPCDSLTTAYSPKTSHRKSKGRRGSPPN) form a disordered region. The segment covering 351 to 363 (DLLQPSSKASIPT) has biased composition (polar residues). A compositionally biased stretch (basic residues) spans 383–392 (TSHRKSKGRR). S394 carries the post-translational modification Phosphoserine.

The protein localises to the cytoplasm. It localises to the cytoskeleton. It is found in the microtubule organizing center. Its subcellular location is the centrosome. The chain is Coiled-coil domain-containing protein 116 (Ccdc116) from Mus musculus (Mouse).